Here is a 61-residue protein sequence, read N- to C-terminus: Small ribosomal subunit protein uS14 (61 aa).

Zn(2+) contacts are provided by Cys-24, Cys-27, Cys-40, and Cys-43.

The protein belongs to the universal ribosomal protein uS14 family. Zinc-binding uS14 subfamily. Part of the 30S ribosomal subunit. Contacts proteins S3 and S10. It depends on Zn(2+) as a cofactor.

Its function is as follows. Binds 16S rRNA, required for the assembly of 30S particles and may also be responsible for determining the conformation of the 16S rRNA at the A site. This Mycoplasmoides gallisepticum (strain R(low / passage 15 / clone 2)) (Mycoplasma gallisepticum) protein is Small ribosomal subunit protein uS14.